Consider the following 1284-residue polypeptide: Peroxisomal ATPase PEX1 (1284 aa).

Positions 339–373 are disordered; it reads SPKQQQDKSKQGVLLPDKEKQLSKSPDHKQISSNR. Over residues 343 to 373 the composition is skewed to basic and acidic residues; that stretch reads QQDKSKQGVLLPDKEKQLSKSPDHKQISSNR. ATP contacts are provided by residues 600–607 and 882–889; these read GGKGSGKS and GPPGTGKT. Residues Ser-1182, Ser-1210, and Ser-1212 each carry the phosphoserine modification. A disordered region spans residues 1261 to 1284; that stretch reads FQNPKKRKNQSGTVFRTGQKVTLA. The segment covering 1270–1284 has biased composition (polar residues); that stretch reads QSGTVFRTGQKVTLA.

It belongs to the AAA ATPase family. Homooligomer; homooligomerizes in the cytosol, interaction with PEX6 promotes dissociation of the homooligomer. Interacts with PEX6; forming the PEX1-PEX6 AAA ATPase complex, which is composed of a heterohexamer formed by a trimer of PEX1-PEX6 dimers. Interacts indirectly with PEX26, via its interaction with PEX6.

It is found in the cytoplasm. The protein resides in the cytosol. The protein localises to the peroxisome membrane. It carries out the reaction ATP + H2O = ADP + phosphate + H(+). In terms of biological role, component of the PEX1-PEX6 AAA ATPase complex, a protein dislocase complex that mediates the ATP-dependent extraction of the PEX5 receptor from peroxisomal membranes, an essential step for PEX5 recycling. Specifically recognizes PEX5 monoubiquitinated at 'Cys-11', and pulls it out of the peroxisome lumen through the PEX2-PEX10-PEX12 retrotranslocation channel. Extraction by the PEX1-PEX6 AAA ATPase complex is accompanied by unfolding of the TPR repeats and release of bound cargo from PEX5. The chain is Peroxisomal ATPase PEX1 from Mus musculus (Mouse).